The primary structure comprises 391 residues: Processive diacylglycerol beta-glucosyltransferase (391 aa).

This sequence belongs to the glycosyltransferase 28 family. UgtP subfamily.

It is found in the cell membrane. The catalysed reaction is a 1,2-diacyl-3-O-(beta-D-glucopyranosyl)-sn-glycerol + UDP-alpha-D-glucose = a 1,2-diacyl-3-O-(beta-D-Glc-(1-&gt;6)-beta-D-Glc)-sn-glycerol + UDP + H(+). It catalyses the reaction a 1,2-diacyl-sn-glycerol + UDP-alpha-D-glucose = a 1,2-diacyl-3-O-(beta-D-glucopyranosyl)-sn-glycerol + UDP + H(+). It functions in the pathway glycolipid metabolism; diglucosyl-diacylglycerol biosynthesis. Processive glucosyltransferase involved in the biosynthesis of both the bilayer- and non-bilayer-forming membrane glucolipids. Is able to successively transfer two glucosyl residues to diacylglycerol (DAG), thereby catalyzing the formation of beta-monoglucosyl-DAG (3-O-(beta-D-glucopyranosyl)-1,2-diacyl-sn-glycerol) and beta-diglucosyl-DAG (3-O-(beta-D-glucopyranosyl-beta-(1-&gt;6)-D-glucopyranosyl)-1,2-diacyl-sn-glycerol). Beta-diglucosyl-DAG is the predominant glycolipid found in Bacillales and is also used as a membrane anchor for lipoteichoic acid (LTA). This is Processive diacylglycerol beta-glucosyltransferase from Staphylococcus aureus (strain MW2).